A 461-amino-acid polypeptide reads, in one-letter code: Squalene synthase BSS (461 aa).

NADP(+)-binding residues include Arg-51 and Arg-76. The Mg(2+) site is built by Asp-79, Glu-82, and Asp-83. NADP(+) contacts are provided by Arg-219, Lys-322, and Arg-324. Residues 430–450 form a helical membrane-spanning segment; it reads VTQHWWSILIFLISIAVFFIP.

This sequence belongs to the phytoene/squalene synthase family. Mg(2+) serves as cofactor.

The protein localises to the endoplasmic reticulum membrane. The enzyme catalyses 2 (2E,6E)-farnesyl diphosphate + NADPH + H(+) = squalene + 2 diphosphate + NADP(+). It catalyses the reaction 2 (2E,6E)-farnesyl diphosphate + NADH + H(+) = squalene + 2 diphosphate + NAD(+). Functionally, converts farnesyl diphosphate (FPP) into squalene, a precursor for sterol biosynthesis in eukaryotes. Does not possess botryococcene synthase activity. The chain is Squalene synthase BSS from Botryococcus braunii (Green alga).